A 269-amino-acid polypeptide reads, in one-letter code: Putative phosphoenolpyruvate synthase regulatory protein (269 aa).

An ADP-binding site is contributed by 149 to 156 (GVSRSGKT).

This sequence belongs to the pyruvate, phosphate/water dikinase regulatory protein family. PSRP subfamily.

The enzyme catalyses [pyruvate, water dikinase] + ADP = [pyruvate, water dikinase]-phosphate + AMP + H(+). It carries out the reaction [pyruvate, water dikinase]-phosphate + phosphate + H(+) = [pyruvate, water dikinase] + diphosphate. Functionally, bifunctional serine/threonine kinase and phosphorylase involved in the regulation of the phosphoenolpyruvate synthase (PEPS) by catalyzing its phosphorylation/dephosphorylation. The polypeptide is Putative phosphoenolpyruvate synthase regulatory protein (Colwellia psychrerythraea (strain 34H / ATCC BAA-681) (Vibrio psychroerythus)).